The primary structure comprises 256 residues: Cytokine-inducible SH2-containing protein (256 aa).

The region spanning 81–162 (WYWGSITASE…PDVVSLVQHY (82 aa)) is the SH2 domain. Positions 168 to 190 (ADTRSDSPDPAPTPALPVSKPDA) are disordered. Positions 207–255 (KLVQPFVRRSSARSLQHLCRLVINRLVTDVDCLPLPRRMADYLRQYPFQ) constitute an SOCS box domain.

Stably associated with the tyrosine-phosphorylated IL3 receptor beta chain and tyrosine-phosphorylated EPO receptor (EPOR).

It participates in protein modification; protein ubiquitination. Functionally, SOCS family proteins form part of a classical negative feedback system that regulates cytokine signal transduction. CIS is involved in the negative regulation of cytokines that signal through the JAK-STAT5 pathway such as erythropoietin, prolactin and interleukin 3 (IL3) receptor. Inhibits STAT5 trans-activation by suppressing its tyrosine phosphorylation. May be a substrate recognition component of a SCF-like ECS (Elongin BC-CUL2/5-SOCS-box protein) E3 ubiquitin-protein ligase complex which mediates the ubiquitination and subsequent proteasomal degradation of target proteins. The chain is Cytokine-inducible SH2-containing protein (Cish) from Rattus norvegicus (Rat).